Here is a 635-residue protein sequence, read N- to C-terminus: Biosynthetic arginine decarboxylase (635 aa).

K103 is subject to N6-(pyridoxal phosphate)lysine. Substrate is bound at residue 283-293; sequence FDVGGGLGVDY.

Belongs to the Orn/Lys/Arg decarboxylase class-II family. SpeA subfamily. Mg(2+) is required as a cofactor. It depends on pyridoxal 5'-phosphate as a cofactor.

It catalyses the reaction L-arginine + H(+) = agmatine + CO2. It functions in the pathway amine and polyamine biosynthesis; agmatine biosynthesis; agmatine from L-arginine: step 1/1. Its function is as follows. Catalyzes the biosynthesis of agmatine from arginine. This chain is Biosynthetic arginine decarboxylase, found in Proteus mirabilis (strain HI4320).